The chain runs to 735 residues: Alpha-adducin (735 aa).

Position 1 is an N-acetylmethionine (methionine 1). A compositionally biased stretch (low complexity) spans 1–11 (MNGDTRAAVVT). A disordered region spans residues 1–21 (MNGDTRAAVVTSPPPTTAPHK). Phosphoserine occurs at positions 12, 59, and 64. Threonine 331 bears the Phosphothreonine mark. Serine 334, serine 353, and serine 355 each carry phosphoserine. Threonine 358 carries the post-translational modification Phosphothreonine. Phosphoserine is present on residues serine 364, serine 366, serine 408, and serine 427. 2 disordered regions span residues 418–487 (GHSF…AVPN) and 576–735 (RREV…KSDS). Threonine 429 is subject to Phosphothreonine. Phosphoserine occurs at positions 431 and 436. Residues 440 to 455 (QQREKTRWLHSGRGDD) are compositionally biased toward basic and acidic residues. Threonine 445 bears the Phosphothreonine; by ROCK2 mark. Phosphoserine is present on residues serine 464 and serine 465. Threonine 480 carries the post-translational modification Phosphothreonine; by ROCK2. Serine 481 bears the Phosphoserine; by PKA mark. Residues 576–601 (RREVERKQKGSEENLDETREQKEKSP) show a composition bias toward basic and acidic residues. Phosphoserine occurs at positions 586, 600, and 605. Threonine 610 bears the Phosphothreonine mark. Serine 613 is modified (phosphoserine). Threonine 614 is subject to Phosphothreonine. Residues 698-712 (GSPMDPGSDGSPGKS) show a composition bias toward low complexity. A phosphoserine mark is found at serine 705, serine 708, and serine 712. A compositionally biased stretch (basic residues) spans 713-735 (PSKKKKKFRTPSFLKKSKKKSDS). Residue serine 714 is modified to Phosphoserine; by PKC. The interval 715–732 (KKKKKFRTPSFLKKSKKK) is interaction with calmodulin. Residue serine 724 is modified to Phosphoserine; by PKA and PKC.

The protein belongs to the aldolase class II family. Adducin subfamily. Heterodimer of an alpha and a beta subunit or an alpha and a gamma subunit.

The protein resides in the cytoplasm. It localises to the cytoskeleton. Its subcellular location is the cell membrane. Functionally, membrane-cytoskeleton-associated protein that promotes the assembly of the spectrin-actin network. Binds to calmodulin. The chain is Alpha-adducin (Add1) from Mus musculus (Mouse).